Reading from the N-terminus, the 281-residue chain is Tetraspanin-5 (281 aa).

Over 1–7 (MNRMSNT) the chain is Cytoplasmic. The helical transmembrane segment at 8 to 28 (VIGFLNILTLISSIVLLGSAL) threads the bilayer. At 29–44 (WMGRSKTTCEHFLQKP) the chain is on the extracellular side. The helical transmembrane segment at 45-65 (LLILGLAILILSVAGLVGACC) threads the bilayer. At 66 to 74 (DVAWVLWVY) the chain is on the cytoplasmic side. A helical transmembrane segment spans residues 75–95 (LFFMVFIIVALMGLTLFGFIV). At 96–221 (TSHSGGVVVD…TVRRDWHKLS (126 aa)) the chain is on the extracellular side. Residues 222 to 242 (LVNVIVVIFLIAVYCVGCCAF) form a helical membrane-spanning segment. Topologically, residues 243–281 (KNAKRPQHYGFPYGRYGMSKSRPGWEQSWSRWWHGRDRY) are cytoplasmic.

The protein belongs to the tetraspanin (TM4SF) family.

Its subcellular location is the membrane. May be involved in the regulation of cell differentiation. The sequence is that of Tetraspanin-5 (TET5) from Arabidopsis thaliana (Mouse-ear cress).